The chain runs to 107 residues: Integration host factor subunit alpha (107 aa).

Belongs to the bacterial histone-like protein family. In terms of assembly, heterodimer of an alpha and a beta chain.

Its function is as follows. This protein is one of the two subunits of integration host factor, a specific DNA-binding protein that functions in genetic recombination as well as in transcriptional and translational control. This is Integration host factor subunit alpha from Brucella abortus (strain S19).